The sequence spans 182 residues: ATP synthase subunit delta (182 aa).

Belongs to the ATPase delta chain family. F-type ATPases have 2 components, F(1) - the catalytic core - and F(0) - the membrane proton channel. F(1) has five subunits: alpha(3), beta(3), gamma(1), delta(1), epsilon(1). CF(0) has four main subunits: a(1), b(1), b'(1) and c(10-14). The alpha and beta chains form an alternating ring which encloses part of the gamma chain. F(1) is attached to F(0) by a central stalk formed by the gamma and epsilon chains, while a peripheral stalk is formed by the delta, b and b' chains.

Its subcellular location is the cellular thylakoid membrane. F(1)F(0) ATP synthase produces ATP from ADP in the presence of a proton or sodium gradient. F-type ATPases consist of two structural domains, F(1) containing the extramembraneous catalytic core and F(0) containing the membrane proton channel, linked together by a central stalk and a peripheral stalk. During catalysis, ATP synthesis in the catalytic domain of F(1) is coupled via a rotary mechanism of the central stalk subunits to proton translocation. In terms of biological role, this protein is part of the stalk that links CF(0) to CF(1). It either transmits conformational changes from CF(0) to CF(1) or is implicated in proton conduction. The polypeptide is ATP synthase subunit delta (Synechococcus sp. (strain CC9605)).